We begin with the raw amino-acid sequence, 248 residues long: 5'-nucleotidase SurE (248 aa).

A divalent metal cation-binding residues include Asp-8, Asp-9, Ser-39, and Asn-91.

It belongs to the SurE nucleotidase family. It depends on a divalent metal cation as a cofactor.

It localises to the cytoplasm. It catalyses the reaction a ribonucleoside 5'-phosphate + H2O = a ribonucleoside + phosphate. Nucleotidase that shows phosphatase activity on nucleoside 5'-monophosphates. The chain is 5'-nucleotidase SurE from Geotalea daltonii (strain DSM 22248 / JCM 15807 / FRC-32) (Geobacter daltonii).